A 118-amino-acid chain; its full sequence is Group 1 truncated hemoglobin GlbN (118 aa).

H70 is a binding site for heme.

The protein belongs to the truncated hemoglobin family. Group I subfamily. As to quaternary structure, monomer. It depends on heme as a cofactor.

It localises to the membrane. The protein is Group 1 truncated hemoglobin GlbN (glbN) of Nostoc commune.